The chain runs to 288 residues: Tryptophan 2,3-dioxygenase (288 aa).

Substrate contacts are provided by residues 57 to 61 (FIIQH), Tyr119, and Arg123. His246 is a heme binding site. Thr260 serves as a coordination point for substrate.

The protein belongs to the tryptophan 2,3-dioxygenase family. As to quaternary structure, homotetramer. It depends on heme as a cofactor.

It catalyses the reaction L-tryptophan + O2 = N-formyl-L-kynurenine. It participates in amino-acid degradation; L-tryptophan degradation via kynurenine pathway; L-kynurenine from L-tryptophan: step 1/2. Functionally, heme-dependent dioxygenase that catalyzes the oxidative cleavage of the L-tryptophan (L-Trp) pyrrole ring and converts L-tryptophan to N-formyl-L-kynurenine. Catalyzes the oxidative cleavage of the indole moiety. In Pseudomonas aeruginosa (strain ATCC 15692 / DSM 22644 / CIP 104116 / JCM 14847 / LMG 12228 / 1C / PRS 101 / PAO1), this protein is Tryptophan 2,3-dioxygenase.